The sequence spans 81 residues: ATP synthase subunit c (81 aa).

Transmembrane regions (helical) follow at residues 14–34 and 60–80; these read YLGAGLAAIGCIGGGVGIGTV and LAFAEVTSLYALFVAIMLLFV.

The protein belongs to the ATPase C chain family. As to quaternary structure, F-type ATPases have 2 components, F(1) - the catalytic core - and F(0) - the membrane proton channel. F(1) has five subunits: alpha(3), beta(3), gamma(1), delta(1), epsilon(1). F(0) has three main subunits: a(1), b(2) and c(10-14). The alpha and beta chains form an alternating ring which encloses part of the gamma chain. F(1) is attached to F(0) by a central stalk formed by the gamma and epsilon chains, while a peripheral stalk is formed by the delta and b chains.

It is found in the cell membrane. In terms of biological role, f(1)F(0) ATP synthase produces ATP from ADP in the presence of a proton or sodium gradient. F-type ATPases consist of two structural domains, F(1) containing the extramembraneous catalytic core and F(0) containing the membrane proton channel, linked together by a central stalk and a peripheral stalk. During catalysis, ATP synthesis in the catalytic domain of F(1) is coupled via a rotary mechanism of the central stalk subunits to proton translocation. Key component of the F(0) channel; it plays a direct role in translocation across the membrane. A homomeric c-ring of between 10-14 subunits forms the central stalk rotor element with the F(1) delta and epsilon subunits. The protein is ATP synthase subunit c of Clostridium acetobutylicum (strain ATCC 824 / DSM 792 / JCM 1419 / IAM 19013 / LMG 5710 / NBRC 13948 / NRRL B-527 / VKM B-1787 / 2291 / W).